Here is a 311-residue protein sequence, read N- to C-terminus: Olfactory receptor 1073 (311 aa).

At M1–P25 the chain is on the extracellular side. N5 carries an N-linked (GlcNAc...) asparagine glycan. A helical membrane pass occupies residues L26–I46. Residues L47–T57 lie on the Cytoplasmic side of the membrane. Residues A58–I78 traverse the membrane as a helical segment. The Extracellular segment spans residues P79–C97. Residues C97 and C179 are joined by a disulfide bond. A helical membrane pass occupies residues I98 to M118. Topologically, residues A119–T133 are cytoplasmic. Residues S134–L154 traverse the membrane as a helical segment. N155 carries an N-linked (GlcNAc...) asparagine glycan. Topologically, residues N155–D196 are extracellular. The helical transmembrane segment at M197–S217 threads the bilayer. Residues Y218–H244 lie on the Cytoplasmic side of the membrane. Residues L245–T265 traverse the membrane as a helical segment. At Q266–T271 the chain is on the extracellular side. A helical membrane pass occupies residues A272 to L292. Residues R293–K311 are Cytoplasmic-facing.

The protein belongs to the G-protein coupled receptor 1 family. Tongue specific.

The protein resides in the cell membrane. Its function is as follows. Possible taste receptor. This chain is Olfactory receptor 1073 (Olr1073), found in Rattus norvegicus (Rat).